Here is a 1212-residue protein sequence, read N- to C-terminus: uncharacterized protein (1212 aa).

Over residues 1 to 31 (MASIQTKLVSQPQTQQPLQNGFFNNYQQNIY) the composition is skewed to polar residues. 7 disordered regions span residues 1 to 70 (MASI…HLQQ), 119 to 169 (PQAQ…FGTN), 211 to 231 (SLNN…SNNN), 248 to 374 (INIG…NNNK), 655 to 681 (QQQP…TQQQ), 935 to 957 (NQNQ…CNNA), and 973 to 1125 (QLQP…QQLQ). 2 stretches are compositionally biased toward low complexity: residues 48-70 (PQQQ…HLQQ) and 119-163 (PQAQ…NNNN). Over residues 256 to 275 (NNSNTNNVNNINTNNTNNNN) the composition is skewed to low complexity. Composition is skewed to polar residues over residues 276–285 (KSGSIDQFGS) and 292–317 (YVNS…SHSP). A compositionally biased stretch (low complexity) spans 322-340 (INSNININSNLQSPQNIQQ). Positions 341 to 351 (TILSPNISPNH) are enriched in polar residues. Over residues 352–373 (NNNNNNNNNNNNNNNNNNNNNN) the composition is skewed to low complexity. Composition is skewed to low complexity over residues 998-1022 (NSVN…NNNN) and 1037-1125 (QNNN…QQLQ).

This is an uncharacterized protein from Dictyostelium discoideum (Social amoeba).